We begin with the raw amino-acid sequence, 37 residues long: Large ribosomal subunit protein bL36c (37 aa).

It belongs to the bacterial ribosomal protein bL36 family.

The protein localises to the plastid. Its subcellular location is the organellar chromatophore. This Paulinella chromatophora protein is Large ribosomal subunit protein bL36c.